The following is a 575-amino-acid chain: Melatonin-related receptor (575 aa).

Residues 1–30 are Extracellular-facing; sequence MGRTLAVPTPYGCIGCKLPQPDYPPALIVF. A helical transmembrane segment spans residues 31–51; sequence MFCAMVITIVVDLIGNSMVIL. Residues 52–64 are Cytoplasmic-facing; that stretch reads AVSKNKKLRNSGN. A helical transmembrane segment spans residues 65-85; it reads VFVVSLSVADMLVAIYPYPLM. Topologically, residues 86 to 103 are extracellular; the sequence is LHAMAIGGWDLSKLQCQM. C101 and C178 are disulfide-bonded. A helical transmembrane segment spans residues 104–124; sequence VGFITGLSVVGSIFNIMAIAI. At 125-143 the chain is on the cytoplasmic side; that stretch reads NRYCYICHSLQYERIFSVR. A helical membrane pass occupies residues 144-164; that stretch reads NTCIYLAVTWIMTVLAVLPNM. Residues 165 to 188 lie on the Extracellular side of the membrane; the sequence is YIGTIEYDPRTYTCIFNYVNNPAF. Residues 189 to 209 traverse the membrane as a helical segment; it reads AVTIVCIHFVLPLLIVGFCYV. Topologically, residues 210-239 are cytoplasmic; sequence KIWTKVLAARDPAGQNPDNQLAEVRNFLTM. Residues 240-260 traverse the membrane as a helical segment; it reads FVIFLLFAVCWCPINALTVLV. The Extracellular segment spans residues 261 to 273; the sequence is AVNPKEMAGKIPN. Residues 274 to 294 traverse the membrane as a helical segment; that stretch reads WVYLAAYFIAYFNSCLNAVIY. Topologically, residues 295 to 575 are cytoplasmic; sequence GVLNENFRRE…VDADSDEMAV (281 aa). Disordered regions lie at residues 368–421 and 446–474; these read VPLP…TVYP and SSHP…TGYT. The span at 455–474 shows a compositional bias: polar residues; sequence PSKTAISPATSFPKPTTGYT.

It belongs to the G-protein coupled receptor 1 family. As to quaternary structure, homodimer, and heterodimer with MTNR1A and MTNR1B. Interacts with KAT5. Interacts with RTN4 isoform A/NOGO-A. Interacts with TGFBR1.

The protein resides in the cell membrane. Functionally, g protein-coupled receptor that plays a role in numerous physiological processes including regulation of energy metabolism, neurite outgrowth or cell migration. Promotes self-renewal and neuronal differentiation of neural progenitor cells through activation of the NOTCH and WNT/beta-catenin signaling pathways. Modulates the KAT5-dependent glucocorticoid receptor signaling by modulating KAT5 subcellular compartmentalisation. Also plays a role in the activation TGFBR1 in the absence of TGFBR2 by interfering with FKBP1A binding to TGFBR1, leading to induction of both canonical and non-canonical SMAD signaling pathways resulting in inhibition of proliferation or promotion of migration. The protein is Melatonin-related receptor (GPR50) of Ovis aries (Sheep).